The following is a 100-amino-acid chain: uncharacterized protein (100 aa).

This is an uncharacterized protein from Mycoplasma pneumoniae (strain ATCC 29342 / M129 / Subtype 1) (Mycoplasmoides pneumoniae).